A 32-amino-acid polypeptide reads, in one-letter code: Turripeptide XIV-18 (32 aa).

I30 bears the Isoleucine amide mark.

Post-translationally, contains 2 disulfide bonds. As to expression, expressed by the venom duct.

It localises to the secreted. This chain is Turripeptide XIV-18, found in Gemmula speciosa (Splendid gem-turris).